The chain runs to 131 residues: MAPSLWKGLVGIGLFALAHAALSAAQHRSYMRLTEKEDESLPIDIVLQTLLAFAVTCYGIVHIAGEFKDMDATSELKNKTFDTLRNHPSFYVFNHRGRVLFRPSDTANSSNQDALSSNTSLKLRKLESLRR.

Residues 1–3 (MAP) are Cytoplasmic-facing. Residues 4-22 (SLWKGLVGIGLFALAHAAL) form a helical membrane-spanning segment. The Lumenal segment spans residues 23 to 43 (SAAQHRSYMRLTEKEDESLPI). The chain crosses the membrane as a helical span at residues 44–63 (DIVLQTLLAFAVTCYGIVHI). Over 64–131 (AGEFKDMDAT…KLRKLESLRR (68 aa)) the chain is Cytoplasmic. The residue at position 120 (Ser120) is a Phosphoserine.

This sequence belongs to the membrane magnesium transporter (TC 1.A.67) family. Component of the ER membrane protein complex (EMC).

Its subcellular location is the endoplasmic reticulum membrane. It is found in the golgi apparatus membrane. The protein resides in the early endosome membrane. Its function is as follows. Part of the endoplasmic reticulum membrane protein complex (EMC) that enables the energy-independent insertion into endoplasmic reticulum membranes of newly synthesized membrane proteins. Preferentially accommodates proteins with transmembrane domains that are weakly hydrophobic or contain destabilizing features such as charged and aromatic residues. Involved in the cotranslational insertion of multi-pass membrane proteins in which stop-transfer membrane-anchor sequences become ER membrane spanning helices. It is also required for the post-translational insertion of tail-anchored/TA proteins in endoplasmic reticulum membranes. By mediating the proper cotranslational insertion of N-terminal transmembrane domains in an N-exo topology, with translocated N-terminus in the lumen of the ER, controls the topology of multi-pass membrane proteins like the G protein-coupled receptors. By regulating the insertion of various proteins in membranes, it is indirectly involved in many cellular processes. May be involved in Mg(2+) transport. The sequence is that of ER membrane protein complex subunit 5 from Pongo abelii (Sumatran orangutan).